Consider the following 63-residue polypeptide: MKIHYLLFAFILVMLSPLAAFSQLINSPVTCMSYGGSCQRSCNGGFRLGGHCGHPKIRCCRRK.

The first 22 residues, 1 to 22 (MKIHYLLFAFILVMLSPLAAFS), serve as a signal peptide directing secretion. Gln23 carries the post-translational modification Pyrrolidone carboxylic acid. 3 disulfides stabilise this stretch: Cys31–Cys59, Cys38–Cys52, and Cys42–Cys60.

This sequence belongs to the beta-defensin family. Predominantly expressed in skeletal muscle, also expressed in esophagus, tongue, and trachea. Also expressed in lung when induced by lipopolysaccharide.

The protein resides in the secreted. Its function is as follows. Has potent antibacterial activity against E.coli (ATCC 25922). The polypeptide is Beta-defensin 6 (Defb6) (Mus musculus (Mouse)).